A 121-amino-acid chain; its full sequence is MIQMESLVQVADNTGARSAKMIGVIGKRTRQAHIGDIITCHIRESIPTASVKKGTVVKAVVVRTAAPIRRDDGSVLRFDGNAVVIIDKDNNPRGTRIFGPVARELREKKFMKIVSLAPEVL.

The protein belongs to the universal ribosomal protein uL14 family. Part of the 50S ribosomal subunit. Forms a cluster with proteins L3 and L19. In the 70S ribosome, L14 and L19 interact and together make contacts with the 16S rRNA in bridges B5 and B8.

Its function is as follows. Binds to 23S rRNA. Forms part of two intersubunit bridges in the 70S ribosome. The chain is Large ribosomal subunit protein uL14 from Akkermansia muciniphila (strain ATCC BAA-835 / DSM 22959 / JCM 33894 / BCRC 81048 / CCUG 64013 / CIP 107961 / Muc).